We begin with the raw amino-acid sequence, 537 residues long: Eukaryotic translation initiation factor 3 subunit L (537 aa).

Positions 300 to 512 constitute a PCI domain; that stretch reads TFSSILLYIQ…IHIADTKVSH (213 aa).

The protein belongs to the eIF-3 subunit L family. Component of the eukaryotic translation initiation factor 3 (eIF-3) complex.

The protein resides in the cytoplasm. Functionally, component of the eukaryotic translation initiation factor 3 (eIF-3) complex, which is involved in protein synthesis of a specialized repertoire of mRNAs and, together with other initiation factors, stimulates binding of mRNA and methionyl-tRNAi to the 40S ribosome. The eIF-3 complex specifically targets and initiates translation of a subset of mRNAs involved in cell proliferation. In Culex quinquefasciatus (Southern house mosquito), this protein is Eukaryotic translation initiation factor 3 subunit L.